The chain runs to 145 residues: Ribosome maturation factor RimP (145 aa).

It belongs to the RimP family.

The protein localises to the cytoplasm. Required for maturation of 30S ribosomal subunits. This chain is Ribosome maturation factor RimP, found in Azotobacter vinelandii (strain DJ / ATCC BAA-1303).